The following is a 201-amino-acid chain: Holliday junction branch migration complex subunit RuvA (201 aa).

The tract at residues 1–64 (MIGRLHGKII…EDAHLLFGFA (64 aa)) is domain I. Residues 65 to 143 (QKQDRTLFRE…GVAQSDFFEE (79 aa)) are domain II. Positions 144 to 154 (HSVETIVATHS) are flexible linker. Positions 154 to 201 (SHDPADEARDALVALGYKLADAEKMIKKVNKAGATSEQLIREALKASL) are domain III.

This sequence belongs to the RuvA family. As to quaternary structure, homotetramer. Forms an RuvA(8)-RuvB(12)-Holliday junction (HJ) complex. HJ DNA is sandwiched between 2 RuvA tetramers; dsDNA enters through RuvA and exits via RuvB. An RuvB hexamer assembles on each DNA strand where it exits the tetramer. Each RuvB hexamer is contacted by two RuvA subunits (via domain III) on 2 adjacent RuvB subunits; this complex drives branch migration. In the full resolvosome a probable DNA-RuvA(4)-RuvB(12)-RuvC(2) complex forms which resolves the HJ.

The protein localises to the cytoplasm. In terms of biological role, the RuvA-RuvB-RuvC complex processes Holliday junction (HJ) DNA during genetic recombination and DNA repair, while the RuvA-RuvB complex plays an important role in the rescue of blocked DNA replication forks via replication fork reversal (RFR). RuvA specifically binds to HJ cruciform DNA, conferring on it an open structure. The RuvB hexamer acts as an ATP-dependent pump, pulling dsDNA into and through the RuvAB complex. HJ branch migration allows RuvC to scan DNA until it finds its consensus sequence, where it cleaves and resolves the cruciform DNA. The polypeptide is Holliday junction branch migration complex subunit RuvA (Actinobacillus pleuropneumoniae serotype 7 (strain AP76)).